A 393-amino-acid chain; its full sequence is Formate-dependent phosphoribosylglycinamide formyltransferase (393 aa).

Residues 22 to 23 (EL) and Glu82 each bind N(1)-(5-phospho-beta-D-ribosyl)glycinamide. ATP is bound by residues Arg114, Lys155, 160 to 165 (SSGHGQ), 195 to 198 (EGFI), and Glu203. In terms of domain architecture, ATP-grasp spans 119 to 308 (RLAAEELGLP…QFALHARAIL (190 aa)). Mg(2+)-binding residues include Glu267 and Glu279. N(1)-(5-phospho-beta-D-ribosyl)glycinamide is bound by residues Asp286, Lys356, and 363–364 (RR).

It belongs to the PurK/PurT family. As to quaternary structure, homodimer.

It catalyses the reaction N(1)-(5-phospho-beta-D-ribosyl)glycinamide + formate + ATP = N(2)-formyl-N(1)-(5-phospho-beta-D-ribosyl)glycinamide + ADP + phosphate + H(+). Its pathway is purine metabolism; IMP biosynthesis via de novo pathway; N(2)-formyl-N(1)-(5-phospho-D-ribosyl)glycinamide from N(1)-(5-phospho-D-ribosyl)glycinamide (formate route): step 1/1. Functionally, involved in the de novo purine biosynthesis. Catalyzes the transfer of formate to 5-phospho-ribosyl-glycinamide (GAR), producing 5-phospho-ribosyl-N-formylglycinamide (FGAR). Formate is provided by PurU via hydrolysis of 10-formyl-tetrahydrofolate. The polypeptide is Formate-dependent phosphoribosylglycinamide formyltransferase (Haemophilus ducreyi (strain 35000HP / ATCC 700724)).